Here is a 122-residue protein sequence, read N- to C-terminus: Large ribosomal subunit protein bL12 (122 aa).

This sequence belongs to the bacterial ribosomal protein bL12 family. As to quaternary structure, homodimer. Part of the ribosomal stalk of the 50S ribosomal subunit. Forms a multimeric L10(L12)X complex, where L10 forms an elongated spine to which 2 to 4 L12 dimers bind in a sequential fashion. Binds GTP-bound translation factors.

Forms part of the ribosomal stalk which helps the ribosome interact with GTP-bound translation factors. Is thus essential for accurate translation. In Actinobacillus succinogenes (strain ATCC 55618 / DSM 22257 / CCUG 43843 / 130Z), this protein is Large ribosomal subunit protein bL12.